A 563-amino-acid chain; its full sequence is MRKRRTLTAPSHFNSMSAALNPMKMAAMQSQPTVDDSWAASISRIMSLTAGDRHKFSSQPFANRLDAILEAVVPSRKDPTHEKVLTIVNALIENGAIRRDEGAGVYDALLHRVSKYNSINTQSNLERLAGDVREAVAQQVRIAAGNLGSLTALNSFLARLPANVERGQDNYTGFLSALKLLVSEVPNTEVYQSGPHYFLQSSRNGTQTVNLTNAFENLKPLWGVKAPTMERLSISALLTPNTRLLLLLVSPFTDSVSISRDSYLGYLLTLYREALGRNHLDERTLEEVTEVSKAMGNENINNLQATLNFLLTNRQKKIPKDYSLTPEEERIVRFIQQAVSLRMMQENLSPTEALDVTAANMEPSFYANNRDFINKLMDYFHRAAAIAPDYFLGAVMNPRWLPPEGFFTGVFDFPERDNYIWDGPDSSLDLTRQDAMRFLEEKFIDDDQRTESRSVSRVPTPASSRRSSVAMASDSLIRPMNNDKNSLREIEVLADKLARWKTYKRESEEARESLPVVVRPKKYSSAISSDESDDGMSKPDKFLKFEGSGNPFAHLRPKLGRCL.

The interval 1 to 117 is peripentonal hexon-tethering domain; that stretch reads MRKRRTLTAP…ALLHRVSKYN (117 aa). Positions 148–261 are binding to hexon-linking protein; sequence GSLTALNSFL…FTDSVSISRD (114 aa). Residue Ser235 is modified to Phosphoserine; by host. Position 284 is a phosphothreonine; by host (Thr284). Positions 449–472 are disordered; the sequence is RTESRSVSRVPTPASSRRSSVAMA. Ser452 and Ser456 each carry phosphoserine; by host. The span at 462–472 shows a compositional bias: low complexity; that stretch reads ASSRRSSVAMA. Phosphoserine; by host occurs at positions 475 and 486. The segment at 522–543 is disordered; the sequence is KYSSAISSDESDDGMSKPDKFL. Positions 549–563 are excised as a propeptide; that stretch reads GNPFAHLRPKLGRCL.

It belongs to the adenoviridae hexon-linking protein IIIa family. In terms of assembly, interacts with hexon proteins; this interaction tethers the peripentonal hexons to hexons situated in the facet. Interacts with the penton protein (via N-terminus). Interacts with packaging protein 3; this interaction is required to promote correct genome packaging. In terms of processing, cleaved near the C-terminus by the viral protease during virion maturation to form the mature protein.

The protein resides in the virion. It is found in the host nucleus. Functionally, structural component of the virion that acts as a cement protein on the capsid exterior which mediates the interactions between the hexons, including the peripentonal hexons, and reaches all the way to the penton vertices. Two hexon linking proteins IIIa, one from each facet, stabilize the unique edge interface between a pair of facets. As the virus enters the host cell, hexon linking proteins IIIa are shed concomitant with virion acidification in the endosome. During virus assembly, seems to play a role in the serotype specificity of the packaging of viral DNA via its interaction with packaging protein 3. This Canis lupus familiaris (Dog) protein is Pre-hexon-linking protein IIIa.